Reading from the N-terminus, the 361-residue chain is DNA polymerase subunit gamma-2, mitochondrial (361 aa).

A mitochondrion-targeting transit peptide spans 1–18 (MSRIQRCFKSLASAGFFR).

Component of the DNA polymerase gamma complex consisting of two subunits: the catalytic subunit DNApol-gamma/DNApolG1 and the accessory subunit PolG2/DNApol-gamma35. As to expression, expressed in ovaries (at protein level).

It is found in the mitochondrion. In terms of biological role, as accessory component of the DNA polymerase gamma complex is involved in the replication of mitochondrial DNA. Does not bind DNA. Essential for mitochondrial DNA maintenance and larval development. The protein is DNA polymerase subunit gamma-2, mitochondrial of Drosophila melanogaster (Fruit fly).